The following is a 298-amino-acid chain: Tyrosine recombinase XerC (298 aa).

The Core-binding (CB) domain occupies 1–84; sequence MNHIQEAFLN…TLRTFYEYWM (84 aa). The 182-residue stretch at 105–286 folds into the Tyr recombinase domain; that stretch reads YLPQFFYEEE…SNQQLRKVYL (182 aa). Catalysis depends on residues Arg-145, Lys-169, His-238, Arg-241, and His-264. Catalysis depends on Tyr-273, which acts as the O-(3'-phospho-DNA)-tyrosine intermediate.

It belongs to the 'phage' integrase family. XerC subfamily. In terms of assembly, forms a cyclic heterotetrameric complex composed of two molecules of XerC and two molecules of XerD.

Its subcellular location is the cytoplasm. Its function is as follows. Site-specific tyrosine recombinase, which acts by catalyzing the cutting and rejoining of the recombining DNA molecules. The XerC-XerD complex is essential to convert dimers of the bacterial chromosome into monomers to permit their segregation at cell division. It also contributes to the segregational stability of plasmids. The polypeptide is Tyrosine recombinase XerC (Staphylococcus aureus (strain Mu3 / ATCC 700698)).